The sequence spans 588 residues: Acid beta-fructofuranosidase 1, vacuolar (588 aa).

Residues 1 to 31 (MDTSTSAYAPLPGEDPLFSGHPPASLRRSWK) lie on the Cytoplasmic side of the membrane. Positions 1 to 115 (MDTSTSAYAP…LSYNWTNAMF (115 aa)) are cleaved as a propeptide — removed in mature form. The helical; Signal-anchor for type II membrane protein transmembrane segment at 32–52 (GFAVIFASVLFLLSLVGLIIH) threads the bilayer. Over 53–588 (QGPQQPPDVM…LRALRKEVGR (536 aa)) the chain is Lumenal. Residues 57 to 86 (QPPDVMPDKQDEHHHPQSTTPASETTASWE) are disordered. Residues 62-71 (MPDKQDEHHH) are compositionally biased toward basic and acidic residues. The segment covering 73-84 (QSTTPASETTAS) has biased composition (polar residues). Residues 130–133 (WMND), Q149, and W157 each bind substrate. D133 is an active-site residue. The N-linked (GlcNAc...) asparagine glycan is linked to N159. 192-193 (WS) provides a ligand contact to substrate. A glycan (N-linked (GlcNAc...) asparagine) is linked at N226. Substrate-binding positions include 256–257 (RD), E311, and D344. A disulfide bridge links C499 with C545.

This sequence belongs to the glycosyl hydrolase 32 family. In terms of assembly, monomer. May be present in two forms, a 70 kDa monomer and a heterodimer of the 30 kDa and 38 kDa subunits. The ratio of the levels of the two forms within cells appears to be regulated developmentally. Post-translationally, glycosylated. As to expression, expressed in buds, stems, roots and leaves. Expressed in the epidermal cells of young leaves and of primordial leaves.

The protein resides in the membrane. The protein localises to the vacuole lumen. The catalysed reaction is Hydrolysis of terminal non-reducing beta-D-fructofuranoside residues in beta-D-fructofuranosides.. Its function is as follows. Acidic vacuolar invertase involved in light-induced bud burst. The sequence is that of Acid beta-fructofuranosidase 1, vacuolar from Rosa hybrid cultivar.